The sequence spans 434 residues: Tol-Pal system protein TolB (434 aa).

The N-terminal stretch at 1-24 (MKFSAYLTTLFIVLFSLFIQTVQA) is a signal peptide.

Belongs to the TolB family. In terms of assembly, the Tol-Pal system is composed of five core proteins: the inner membrane proteins TolA, TolQ and TolR, the periplasmic protein TolB and the outer membrane protein Pal. They form a network linking the inner and outer membranes and the peptidoglycan layer.

The protein localises to the periplasm. In terms of biological role, part of the Tol-Pal system, which plays a role in outer membrane invagination during cell division and is important for maintaining outer membrane integrity. The polypeptide is Tol-Pal system protein TolB (Histophilus somni (strain 129Pt) (Haemophilus somnus)).